We begin with the raw amino-acid sequence, 413 residues long: Multifunctional CCA protein (413 aa).

ATP is bound by residues G8 and R11. CTP-binding residues include G8 and R11. Mg(2+) is bound by residues D21 and D23. 3 residues coordinate ATP: R91, R137, and R140. The CTP site is built by R91, R137, and R140. In terms of domain architecture, HD spans T228–W329.

This sequence belongs to the tRNA nucleotidyltransferase/poly(A) polymerase family. Bacterial CCA-adding enzyme type 1 subfamily. Monomer. Can also form homodimers and oligomers. Mg(2+) is required as a cofactor. Requires Ni(2+) as cofactor.

The catalysed reaction is a tRNA precursor + 2 CTP + ATP = a tRNA with a 3' CCA end + 3 diphosphate. The enzyme catalyses a tRNA with a 3' CCA end + 2 CTP + ATP = a tRNA with a 3' CCACCA end + 3 diphosphate. Catalyzes the addition and repair of the essential 3'-terminal CCA sequence in tRNAs without using a nucleic acid template. Adds these three nucleotides in the order of C, C, and A to the tRNA nucleotide-73, using CTP and ATP as substrates and producing inorganic pyrophosphate. tRNA 3'-terminal CCA addition is required both for tRNA processing and repair. Also involved in tRNA surveillance by mediating tandem CCA addition to generate a CCACCA at the 3' terminus of unstable tRNAs. While stable tRNAs receive only 3'-terminal CCA, unstable tRNAs are marked with CCACCA and rapidly degraded. The sequence is that of Multifunctional CCA protein from Salmonella paratyphi A (strain ATCC 9150 / SARB42).